The following is an 83-amino-acid chain: Cytochrome b559 subunit alpha (83 aa).

A helical membrane pass occupies residues 21-35; the sequence is VIHSITIPSLFIAGW. Residue histidine 23 participates in heme binding.

It belongs to the PsbE/PsbF family. Heterodimer of an alpha subunit and a beta subunit. PSII is composed of 1 copy each of membrane proteins PsbA, PsbB, PsbC, PsbD, PsbE, PsbF, PsbH, PsbI, PsbJ, PsbK, PsbL, PsbM, PsbT, PsbX, PsbY, PsbZ, Psb30/Ycf12, at least 3 peripheral proteins of the oxygen-evolving complex and a large number of cofactors. It forms dimeric complexes. Heme b serves as cofactor.

It localises to the plastid. The protein localises to the chloroplast thylakoid membrane. In terms of biological role, this b-type cytochrome is tightly associated with the reaction center of photosystem II (PSII). PSII is a light-driven water:plastoquinone oxidoreductase that uses light energy to abstract electrons from H(2)O, generating O(2) and a proton gradient subsequently used for ATP formation. It consists of a core antenna complex that captures photons, and an electron transfer chain that converts photonic excitation into a charge separation. This is Cytochrome b559 subunit alpha from Marchantia polymorpha (Common liverwort).